The sequence spans 189 residues: Small ribosomal subunit protein uS7 (189 aa).

The protein belongs to the universal ribosomal protein uS7 family. As to quaternary structure, part of the 30S ribosomal subunit.

Its function is as follows. One of the primary rRNA binding proteins, it binds directly to 16S rRNA where it nucleates assembly of the head domain of the 30S subunit. Is located at the subunit interface close to the decoding center. This is Small ribosomal subunit protein uS7 from Methanosarcina mazei (strain ATCC BAA-159 / DSM 3647 / Goe1 / Go1 / JCM 11833 / OCM 88) (Methanosarcina frisia).